A 1118-amino-acid polypeptide reads, in one-letter code: Cytospin-A (1118 aa).

2 disordered regions span residues 1–157 (MKKS…DGQI) and 198–221 (GGKE…PHVS). 2 stretches are compositionally biased toward polar residues: residues 57–102 (NPTS…TKET) and 112–123 (SRASANKKQSAA). Residues 144–153 (SESRMSKSKS) show a composition bias toward basic and acidic residues. Residues 204 to 215 (EGPEEEEEEEEE) are compositionally biased toward acidic residues. A coiled-coil region spans residues 225–264 (AADVESTLILLQEQNQAIREELNLLKSENRMLKDRLNALG). The segment at 289–379 (AGSGQSDGGG…RRGSSGNASE (91 aa)) is disordered. The span at 343-363 (SSDDALDAPSGASSSSESECA) shows a compositional bias: low complexity. 2 coiled-coil regions span residues 384–438 (CLTE…MDSL) and 475–796 (GRYM…RGRV). 3 disordered regions span residues 771 to 790 (QEKN…RKQD), 837 to 876 (FDSA…PPAA), and 920 to 1001 (SAAS…ERKD). Positions 838-855 (DSASQGPPSNGASVTPTV) are enriched in polar residues. Over residues 861–872 (PRTPLSPSPMKT) the composition is skewed to pro residues. Positions 930–945 (QRVSNMDSTKTISVSR) are enriched in polar residues. Basic and acidic residues predominate over residues 946–956 (RSSEEMKRDMS). Low complexity predominate over residues 961–986 (ASSTSLMAMSAASAPLSLSSSSPTAS). Residues 1012 to 1117 (GSKRNALLKW…YVTAIYKYFE (106 aa)) enclose the Calponin-homology (CH) domain.

Belongs to the cytospin-A family. In terms of assembly, may interact with both microtubules and actin cytoskeleton.

The protein localises to the cytoplasm. It is found in the cytoskeleton. The protein resides in the spindle. Its subcellular location is the cell junction. It localises to the gap junction. Functionally, involved in cytokinesis and spindle organization. May play a role in actin cytoskeleton organization and microtubule stabilization and hence required for proper cell adhesion and migration. In Takifugu rubripes (Japanese pufferfish), this protein is Cytospin-A (specc1l).